Consider the following 372-residue polypeptide: N-methyl-L-tryptophan oxidase (372 aa).

4–34 is a binding site for FAD; that stretch reads DLIIIGSGSVGAAAGYYATRAGLKVLMTDAH. The residue at position 307 (cysteine 307) is an S-8alpha-FAD cysteine.

The protein belongs to the MSOX/MTOX family. MTOX subfamily. As to quaternary structure, monomer. FAD is required as a cofactor.

It catalyses the reaction N(alpha)-methyl-L-tryptophan + O2 + H2O = L-tryptophan + formaldehyde + H2O2. Catalyzes the oxidative demethylation of N-methyl-L-tryptophan. This Salmonella typhimurium (strain LT2 / SGSC1412 / ATCC 700720) protein is N-methyl-L-tryptophan oxidase.